The primary structure comprises 92 residues: CRISPR-associated endoribonuclease Cas2 (92 aa).

D9 is a binding site for Mg(2+).

The protein belongs to the CRISPR-associated endoribonuclease Cas2 protein family. In terms of assembly, homodimer, forms a heterotetramer with a Cas1 homodimer. Mg(2+) serves as cofactor.

Functionally, CRISPR (clustered regularly interspaced short palindromic repeat), is an adaptive immune system that provides protection against mobile genetic elements (viruses, transposable elements and conjugative plasmids). CRISPR clusters contain sequences complementary to antecedent mobile elements and target invading nucleic acids. CRISPR clusters are transcribed and processed into CRISPR RNA (crRNA). Functions as a ssRNA-specific endoribonuclease. Involved in the integration of spacer DNA into the CRISPR cassette. This chain is CRISPR-associated endoribonuclease Cas2, found in Aeropyrum pernix (strain ATCC 700893 / DSM 11879 / JCM 9820 / NBRC 100138 / K1).